We begin with the raw amino-acid sequence, 974 residues long: Membrane-associated phosphatidylinositol transfer protein 3 (974 aa).

A phosphoserine mark is found at Ser30, Ser31, Ser109, Ser295, Ser298, Ser321, Ser343, and Ser495. The segment at 310–347 (CSLASSKRLSKSNVDVSSGVEDEDPKRPLPRKQSDSST) is disordered. Polar residues predominate over residues 312–325 (LASSKRLSKSNVDV). Positions 390 to 594 (FDFDVSDFFL…VAFILRQVMR (205 aa)) constitute a DDHD domain. Positions 497–535 (PLLDAPASPPQAPRFQRTERRLSKGSSHSDSSESSDSLA) are disordered. Residues 520 to 533 (KGSSHSDSSESSDS) show a composition bias toward low complexity. A phosphoserine mark is found at Ser612, Ser907, Ser928, and Ser946. Residues 927–974 (MSVQQPDPPAANPKPERAQSQPESDKDHERPLPALSWARGPPKFESVP) are disordered.

Belongs to the PtdIns transfer protein family. PI transfer class IIA subfamily. Interacts with PTK2B via its C-terminus.

Its subcellular location is the endomembrane system. Catalyzes the transfer of phosphatidylinositol and phosphatidylcholine between membranes (in vitro). Binds calcium ions. In Mus musculus (Mouse), this protein is Membrane-associated phosphatidylinositol transfer protein 3 (Pitpnm3).